A 163-amino-acid chain; its full sequence is Homoaconitase small subunit (163 aa).

Belongs to the LeuD family. In terms of assembly, heterodimer of HacA and HacB.

It catalyses the reaction (2R,3S)-homoisocitrate = cis-homoaconitate + H2O. It participates in amino-acid biosynthesis; L-lysine biosynthesis via AAA pathway; L-alpha-aminoadipate from 2-oxoglutarate: step 3/5. Is not inhibited by lysine. In terms of biological role, catalyzes the reversible hydration of cis-homoaconitate ((Z)-but-1-ene-1,2,4-tricarboxylate) to homoisocitrate ((1R,2S)-1-hydroxybutane-1,2,4-tricarboxylate). Can catalyze neither the dehydration of (R)-homocitrate ((2R)-2-hydroxybutane-1,2,4-tricarboxylate) into cis-homoaconitate in vitro, nor the reverse reaction. Is not active toward (S)-homocitrate, cis-aconitate or citrate as substrate. The protein is Homoaconitase small subunit (hacB) of Thermus thermophilus (strain ATCC BAA-163 / DSM 7039 / HB27).